The sequence spans 388 residues: Chaperone protein DnaJ (388 aa).

The J domain maps to 6–71 (DYYEILGVPR…EKRKLYDQFG (66 aa)). The CR-type zinc finger occupies 147 to 229 (GCEKEIPIYR…CGGTGNVRRQ (83 aa)). Positions 160, 163, 177, 180, 203, 206, 217, and 220 each coordinate Zn(2+). CXXCXGXG motif repeat units lie at residues 160–167 (CSVCGGSG), 177–184 (CQKCGGTG), 203–210 (CDACGGTG), and 217–224 (CRECGGTG).

Belongs to the DnaJ family. In terms of assembly, homodimer. It depends on Zn(2+) as a cofactor.

The protein resides in the cytoplasm. Participates actively in the response to hyperosmotic and heat shock by preventing the aggregation of stress-denatured proteins and by disaggregating proteins, also in an autonomous, DnaK-independent fashion. Unfolded proteins bind initially to DnaJ; upon interaction with the DnaJ-bound protein, DnaK hydrolyzes its bound ATP, resulting in the formation of a stable complex. GrpE releases ADP from DnaK; ATP binding to DnaK triggers the release of the substrate protein, thus completing the reaction cycle. Several rounds of ATP-dependent interactions between DnaJ, DnaK and GrpE are required for fully efficient folding. Also involved, together with DnaK and GrpE, in the DNA replication of plasmids through activation of initiation proteins. The polypeptide is Chaperone protein DnaJ (Caldicellulosiruptor bescii (strain ATCC BAA-1888 / DSM 6725 / KCTC 15123 / Z-1320) (Anaerocellum thermophilum)).